The primary structure comprises 149 residues: Nucleoside diphosphate kinase (149 aa).

ATP is bound by residues K9, F57, R85, T91, R102, and N112. Catalysis depends on H115, which acts as the Pros-phosphohistidine intermediate.

This sequence belongs to the NDK family. In terms of assembly, homotetramer. It depends on Mg(2+) as a cofactor.

Its subcellular location is the cytoplasm. The catalysed reaction is a 2'-deoxyribonucleoside 5'-diphosphate + ATP = a 2'-deoxyribonucleoside 5'-triphosphate + ADP. It carries out the reaction a ribonucleoside 5'-diphosphate + ATP = a ribonucleoside 5'-triphosphate + ADP. Its function is as follows. Major role in the synthesis of nucleoside triphosphates other than ATP. The ATP gamma phosphate is transferred to the NDP beta phosphate via a ping-pong mechanism, using a phosphorylated active-site intermediate. The sequence is that of Nucleoside diphosphate kinase from Staphylococcus epidermidis (strain ATCC 35984 / DSM 28319 / BCRC 17069 / CCUG 31568 / BM 3577 / RP62A).